The primary structure comprises 452 residues: tRNA modification GTPase MnmE (452 aa).

(6S)-5-formyl-5,6,7,8-tetrahydrofolate contacts are provided by Arg21, Glu78, and Lys118. A TrmE-type G domain is found at 214–375 (GMKVVIAGRP…LREHLKKSMG (162 aa)). Asn224 is a binding site for K(+). Residues 224–229 (NAGKSS), 243–249 (TNIAGTT), and 268–271 (DTAG) contribute to the GTP site. Ser228 serves as a coordination point for Mg(2+). 3 residues coordinate K(+): Thr243, Ile245, and Thr248. Mg(2+) is bound at residue Thr249. Lys452 serves as a coordination point for (6S)-5-formyl-5,6,7,8-tetrahydrofolate.

It belongs to the TRAFAC class TrmE-Era-EngA-EngB-Septin-like GTPase superfamily. TrmE GTPase family. As to quaternary structure, homodimer. Heterotetramer of two MnmE and two MnmG subunits. K(+) is required as a cofactor.

The protein localises to the cytoplasm. Functionally, exhibits a very high intrinsic GTPase hydrolysis rate. Involved in the addition of a carboxymethylaminomethyl (cmnm) group at the wobble position (U34) of certain tRNAs, forming tRNA-cmnm(5)s(2)U34. The protein is tRNA modification GTPase MnmE of Actinobacillus pleuropneumoniae serotype 3 (strain JL03).